Here is a 428-residue protein sequence, read N- to C-terminus: D-amino acid dehydrogenase (428 aa).

Val-3–Tyr-17 serves as a coordination point for FAD.

This sequence belongs to the DadA oxidoreductase family. Requires FAD as cofactor.

It catalyses the reaction a D-alpha-amino acid + A + H2O = a 2-oxocarboxylate + AH2 + NH4(+). It participates in amino-acid degradation; D-alanine degradation; NH(3) and pyruvate from D-alanine: step 1/1. In terms of biological role, oxidative deamination of D-amino acids. This is D-amino acid dehydrogenase from Burkholderia thailandensis (strain ATCC 700388 / DSM 13276 / CCUG 48851 / CIP 106301 / E264).